A 57-amino-acid chain; its full sequence is uncharacterized protein (57 aa).

The signal sequence occupies residues 1–22; the sequence is MNEIIITIIVLILLLFITLSRN. Positions 26-57 form a coiled coil; it reads NNQSNNGKKEKLIKCKKEVQQLRQKLDQLTFQ.

This is an uncharacterized protein from Acheta domesticus (House cricket).